The primary structure comprises 330 residues: ADP-L-glycero-D-manno-heptose-6-epimerase (330 aa).

NADP(+)-binding positions include 11-12 (FI), 32-33 (DN), Lys39, Lys54, 75-79 (EGACS), and Asn92. Tyr139 functions as the Proton acceptor in the catalytic mechanism. NADP(+) is bound at residue Lys143. Position 168 (Asn168) interacts with substrate. Residues Val169 and Lys177 each coordinate NADP(+). The Proton acceptor role is filled by Lys177. Substrate is bound by residues Arg179, His186, 200–203 (FGEY), Arg213, and Tyr292.

Belongs to the NAD(P)-dependent epimerase/dehydratase family. HldD subfamily. In terms of assembly, homopentamer. The cofactor is NADP(+).

It carries out the reaction ADP-D-glycero-beta-D-manno-heptose = ADP-L-glycero-beta-D-manno-heptose. It functions in the pathway nucleotide-sugar biosynthesis; ADP-L-glycero-beta-D-manno-heptose biosynthesis; ADP-L-glycero-beta-D-manno-heptose from D-glycero-beta-D-manno-heptose 7-phosphate: step 4/4. Functionally, catalyzes the interconversion between ADP-D-glycero-beta-D-manno-heptose and ADP-L-glycero-beta-D-manno-heptose via an epimerization at carbon 6 of the heptose. The chain is ADP-L-glycero-D-manno-heptose-6-epimerase from Burkholderia cenocepacia (strain HI2424).